Consider the following 140-residue polypeptide: ATP synthase epsilon chain (140 aa).

Belongs to the ATPase epsilon chain family. F-type ATPases have 2 components, CF(1) - the catalytic core - and CF(0) - the membrane proton channel. CF(1) has five subunits: alpha(3), beta(3), gamma(1), delta(1), epsilon(1). CF(0) has three main subunits: a, b and c.

The protein resides in the cell inner membrane. Its function is as follows. Produces ATP from ADP in the presence of a proton gradient across the membrane. The protein is ATP synthase epsilon chain of Neisseria meningitidis serogroup B (strain ATCC BAA-335 / MC58).